We begin with the raw amino-acid sequence, 281 residues long: MILIDGKKIAAELREQLRQEVVELKAKHNKIPGLTVILIGEMAPSQIYVRMKEKAANEVGLKSEVIRYPEAVEEKTVLDKIEELNKDESISGILVQLPLPKHIDKQKVIETILPGKDVDGFHPMNVGNLSSGYESSVPCTPLGCYLMIKKIEPNLSGKKAVMIGRSNLNGKPMAQLLLKENCTVTITHSKTKDLKAECLEADIIVAAVGIPELVKADWVKKDAIVIDVGINKTENGIVGDVAFEEVSKVARALTPVPGGVGPMTIACLLKNTIECFKRSQK.

NADP(+)-binding positions include 164–166 (GRS), serine 189, and isoleucine 230.

It belongs to the tetrahydrofolate dehydrogenase/cyclohydrolase family. Homodimer.

The enzyme catalyses (6R)-5,10-methylene-5,6,7,8-tetrahydrofolate + NADP(+) = (6R)-5,10-methenyltetrahydrofolate + NADPH. It catalyses the reaction (6R)-5,10-methenyltetrahydrofolate + H2O = (6R)-10-formyltetrahydrofolate + H(+). It participates in one-carbon metabolism; tetrahydrofolate interconversion. Functionally, catalyzes the oxidation of 5,10-methylenetetrahydrofolate to 5,10-methenyltetrahydrofolate and then the hydrolysis of 5,10-methenyltetrahydrofolate to 10-formyltetrahydrofolate. The chain is Bifunctional protein FolD from Pelagibacter ubique (strain HTCC1062).